The chain runs to 511 residues: Maturase K (511 aa).

It belongs to the intron maturase 2 family. MatK subfamily.

It is found in the plastid. Its subcellular location is the chloroplast. Usually encoded in the trnK tRNA gene intron. Probably assists in splicing its own and other chloroplast group II introns. The chain is Maturase K from Brachypodium distachyon (Purple false brome).